The primary structure comprises 483 residues: Pre-glycoprotein polyprotein GP complex (483 aa).

Residue G2 is the site of N-myristoyl glycine; by host attachment. Over 2–17 the chain is Extracellular; that stretch reads GQFISFMQEIPIFLQE. Residues 18 to 32 traverse the membrane as a helical segment; the sequence is ALNIALVAVSLICIV. Residue K33 is a topological domain, cytoplasmic. The helical transmembrane segment at 34-53 threads the bilayer; it reads GLVNLYRCGLFQLMVFLVLA. Extracellular segments lie at residues 54-58 and 59-422; these read GRSCS and EETF…TLVD. Zn(2+) is bound at residue C57. N-linked (GlcNAc...) asparagine; by host glycosylation is found at N83 and N95. 6 disulfide bridges follow: C92/C224, C134/C162, C205/C211, C269/C282, C291/C300, and C354/C375. N-linked (GlcNAc...) asparagine; by host glycans are attached at residues N164 and N176. N355, N363, N380, and N385 each carry an N-linked (GlcNAc...) asparagine; by host glycan. A helical membrane pass occupies residues 423–443; the sequence is ICFWSTVFFTSTLFLHLIGFP. The Cytoplasmic segment spans residues 444 to 483; that stretch reads THEHIRGEGCPLPHRLNSMGGCRCGKYLPLKKPTIWHRRH. The Zn(2+) site is built by H445, H447, C453, H457, C465, C467, and H483.

Belongs to the arenaviridae GPC protein family. In terms of assembly, homotetramer; disulfide-linked. As to quaternary structure, homotetramer. GP2 homotetramers bind through ionic interactions with GP1 homotetramers to form the GP complex together with the stable signal peptide. The GP-C polyprotein interacts with the host protease MBTPS1/SKI-1 resulting in the polyprotein processing. Post-translationally, specific enzymatic cleavages in vivo yield mature proteins. GP-C polyprotein is cleaved in the endoplasmic reticulum by the host protease MBTPS1. Only cleaved glycoprotein is incorporated into virions. The SSP remains stably associated with the GP complex following cleavage by signal peptidase and plays crucial roles in the trafficking of GP through the secretory pathway. In terms of processing, myristoylation is necessary for GP2-mediated fusion activity.

The protein resides in the virion membrane. The protein localises to the host endoplasmic reticulum membrane. It is found in the host Golgi apparatus membrane. Its subcellular location is the host cell membrane. Class I viral fusion protein that directs fusion of viral and host endosomal membranes, leading to delivery of the nucleocapsid into the cytoplasm. Membrane fusion is mediated by irreversible conformational changes induced upon acidification in the endosome. Functionally, stable signal peptide (SSP): cleaved and functions as a signal peptide. In addition, it is also retained as the third component of the GP complex. The SSP is required for efficient glycoprotein expression, post-translational maturation cleavage of GP1 and GP2, glycoprotein transport to the cell surface plasma membrane, formation of infectious virus particles, and acid pH-dependent glycoprotein-mediated cell fusion. Its function is as follows. Interacts with the host receptor. The protein is Pre-glycoprotein polyprotein GP complex of Tacaribe virus (strain V5) (TCRV).